A 273-amino-acid chain; its full sequence is Sanguinarine reductase (273 aa).

Ser-153 acts as the Proton donor in catalysis. Substrate contacts are provided by residues 157 to 161 and Lys-175; that span reads CDPDH.

It belongs to the NAD(P)-dependent epimerase/dehydratase family. As to quaternary structure, monomer.

The enzyme catalyses dihydrosanguinarine + NADP(+) = sanguinarine + NADPH. It catalyses the reaction dihydrosanguinarine + NAD(+) = sanguinarine + NADH. It carries out the reaction dihydrochelirubine + NAD(+) = chelirubine + NADH. The catalysed reaction is dihydrochelirubine + NADP(+) = chelirubine + NADPH. Its activity is regulated as follows. Inhibited by iodoacetamide and irreversibly by its product, dihydrosanguinarine. Catalyzes the reduction of benzophenanthridines, preferentially sanguinarine, to the corresponding dihydroalkaloids. Involved in detoxifying the phytoalexins produced by plant itself. The sanguinarine produced by intact cells upon elicitation, after excretion and binding to cell wall elements, is rapidly reabsorbed and reduced to the less toxic dihydrosanguinarine. Can work with both NAD(P) or NAD as a hydrogen donor, but at low concentrations, the reaction velocity with NAD(P)H is threefold higher than with NADH. However, chelerythrine shows maximum conversion rates with NADH. The substrate preference is sanguinarine &gt; chelerythrine &gt; chelirubine, macarpine or 10-OH-chelerythrine. No activity with berberine or phenanthridine cations. This Eschscholzia californica (California poppy) protein is Sanguinarine reductase.